The sequence spans 396 residues: Elongation factor Tu (396 aa).

One can recognise a tr-type G domain in the interval 10-206 (KPHVNIGTIG…AVDAYIPEPE (197 aa)). A G1 region spans residues 19–26 (GHVDHGKT). 19 to 26 (GHVDHGKT) is a binding site for GTP. Thr26 contacts Mg(2+). Positions 60–64 (GITIS) are G2. A G3 region spans residues 81-84 (DCPG). GTP contacts are provided by residues 81–85 (DCPGH) and 136–139 (NKVD). Positions 136–139 (NKVD) are G4. The G5 stretch occupies residues 174 to 176 (SAL).

It belongs to the TRAFAC class translation factor GTPase superfamily. Classic translation factor GTPase family. EF-Tu/EF-1A subfamily. Monomer.

The protein resides in the cytoplasm. It carries out the reaction GTP + H2O = GDP + phosphate + H(+). In terms of biological role, GTP hydrolase that promotes the GTP-dependent binding of aminoacyl-tRNA to the A-site of ribosomes during protein biosynthesis. The protein is Elongation factor Tu of Magnetococcus marinus (strain ATCC BAA-1437 / JCM 17883 / MC-1).